Consider the following 284-residue polypeptide: Large ribosomal subunit protein uL2 (284 aa).

The tract at residues 232–284 (RGTAMNPVDHPHGGGEGRHNGYIPRTPWGKVTKGLKTRDKRKSNKWIVKDRRK) is disordered. Residues 240–250 (DHPHGGGEGRH) show a composition bias toward basic and acidic residues. A compositionally biased stretch (basic residues) spans 264 to 284 (KGLKTRDKRKSNKWIVKDRRK).

It belongs to the universal ribosomal protein uL2 family. Part of the 50S ribosomal subunit. Forms a bridge to the 30S subunit in the 70S ribosome.

In terms of biological role, one of the primary rRNA binding proteins. Required for association of the 30S and 50S subunits to form the 70S ribosome, for tRNA binding and peptide bond formation. It has been suggested to have peptidyltransferase activity; this is somewhat controversial. Makes several contacts with the 16S rRNA in the 70S ribosome. This is Large ribosomal subunit protein uL2 from Chlamydia felis (strain Fe/C-56) (Chlamydophila felis).